A 574-amino-acid chain; its full sequence is Septation ring formation regulator EzrA (574 aa).

Topologically, residues 1–7 are extracellular; sequence MSNGLII. Residues 8–26 traverse the membrane as a helical segment; it reads LIIVIAVALILAYVAAVVL. Residues 27 to 574 lie on the Cytoplasmic side of the membrane; that stretch reads RKRNETLLDS…YEKTRENIRF (548 aa). 3 coiled-coil regions span residues 104-141, 267-424, and 456-524; these read LKAK…EAKN, NITQ…QKVN, and ASDH…SIQE.

Belongs to the EzrA family.

It is found in the cell membrane. Its function is as follows. Negative regulator of FtsZ ring formation; modulates the frequency and position of FtsZ ring formation. Inhibits FtsZ ring formation at polar sites. Interacts either with FtsZ or with one of its binding partners to promote depolymerization. The protein is Septation ring formation regulator EzrA of Streptococcus gordonii (strain Challis / ATCC 35105 / BCRC 15272 / CH1 / DL1 / V288).